The chain runs to 96 residues: Aspartyl/glutamyl-tRNA(Asn/Gln) amidotransferase subunit C (96 aa).

The protein belongs to the GatC family. As to quaternary structure, heterotrimer of A, B and C subunits.

It carries out the reaction L-glutamyl-tRNA(Gln) + L-glutamine + ATP + H2O = L-glutaminyl-tRNA(Gln) + L-glutamate + ADP + phosphate + H(+). The enzyme catalyses L-aspartyl-tRNA(Asn) + L-glutamine + ATP + H2O = L-asparaginyl-tRNA(Asn) + L-glutamate + ADP + phosphate + 2 H(+). In terms of biological role, allows the formation of correctly charged Asn-tRNA(Asn) or Gln-tRNA(Gln) through the transamidation of misacylated Asp-tRNA(Asn) or Glu-tRNA(Gln) in organisms which lack either or both of asparaginyl-tRNA or glutaminyl-tRNA synthetases. The reaction takes place in the presence of glutamine and ATP through an activated phospho-Asp-tRNA(Asn) or phospho-Glu-tRNA(Gln). The sequence is that of Aspartyl/glutamyl-tRNA(Asn/Gln) amidotransferase subunit C from Leptospira borgpetersenii serovar Hardjo-bovis (strain JB197).